A 218-amino-acid chain; its full sequence is Protein-L-isoaspartate O-methyltransferase (218 aa).

S69 is an active-site residue.

Belongs to the methyltransferase superfamily. L-isoaspartyl/D-aspartyl protein methyltransferase family.

The protein localises to the cytoplasm. The enzyme catalyses [protein]-L-isoaspartate + S-adenosyl-L-methionine = [protein]-L-isoaspartate alpha-methyl ester + S-adenosyl-L-homocysteine. Functionally, catalyzes the methyl esterification of L-isoaspartyl residues in peptides and proteins that result from spontaneous decomposition of normal L-aspartyl and L-asparaginyl residues. It plays a role in the repair and/or degradation of damaged proteins. The protein is Protein-L-isoaspartate O-methyltransferase of Aromatoleum aromaticum (strain DSM 19018 / LMG 30748 / EbN1) (Azoarcus sp. (strain EbN1)).